The sequence spans 336 residues: MKLAVIAGDGIGPEVIGEALRVLDAVVPGVEKTEYDLGARLYHRTGEVLPDSVLDELKGHDAILLGAIGDPSMPSGVLERGLLLRIRFELDHHINLRPGRLYPGVQSPLAGNPEIDFVVVREGTEGPYTGNGGAIRVGTPHEIATEVSVNTAYGVRRVVQDAFKRAQQRRKHLTLVHKNNVLTNAGSLWWRTVQAVAAEYPEVEVAYQHVDAATIHMVTDPGRFDVIVTDNLFGDIITDLAAAVCGGIGLAASGNIDATLTNPSMFEPVHGSAPDIAGQGIADPTAAIMSVSLLLAHMAEIDAAARVDKAVAEHLATRGDEKLSTTQVGDRILGKL.

Residues R87, R97, R121, and D211 each coordinate substrate. Residues D211, D235, and D239 each coordinate Mg(2+). Residue G271 to D283 participates in NAD(+) binding.

It belongs to the isocitrate and isopropylmalate dehydrogenases family. LeuB type 2 subfamily. In terms of assembly, homodimer. The cofactor is Mg(2+). Mn(2+) serves as cofactor.

Its subcellular location is the cytoplasm. It carries out the reaction (2R,3S)-3-isopropylmalate + NAD(+) = 4-methyl-2-oxopentanoate + CO2 + NADH. Its pathway is amino-acid biosynthesis; L-leucine biosynthesis; L-leucine from 3-methyl-2-oxobutanoate: step 3/4. Functionally, catalyzes the oxidation of 3-carboxy-2-hydroxy-4-methylpentanoate (3-isopropylmalate) to 3-carboxy-4-methyl-2-oxopentanoate. The product decarboxylates to 4-methyl-2 oxopentanoate. This is 3-isopropylmalate dehydrogenase from Mycolicibacterium gilvum (strain PYR-GCK) (Mycobacterium gilvum (strain PYR-GCK)).